Reading from the N-terminus, the 150-residue chain is Interferon antagonist OPG027 (150 aa).

The protein belongs to the orthopoxvirus OPG027 family.

Functionally, inhibits antiviral activity induced by type I interferons. Does not block signal transduction of IFN, but is important to counteract the host antiviral state induced by a pre-treatment with IFN. The chain is Interferon antagonist OPG027 (OPG027) from Cynomys gunnisoni (Gunnison's prairie dog).